A 73-amino-acid polypeptide reads, in one-letter code: Antitoxin VapB2 (73 aa).

In terms of assembly, forms a homodimer, which binds to a toxin homodimer, which then oligomerizes further to a hetero-octamer. When bound to toxin VapC2 the toxin activity is inhibited; 1 antitoxin may suffice to inhibit toxin.

In terms of biological role, antitoxin component of a type II toxin-antitoxin (TA) system. Upon expression in M.smegmatis neutralizes the effect of cognate toxin VapC2. The C-terminal helix of the antitoxin may obstruct the toxin's RNA-binding groove, blocking access to the active sites. Additionally, the C-terminal arginine of the antitoxin may remove Mg(2+) ions from the toxin active sites. This Mycobacterium tuberculosis (strain ATCC 25618 / H37Rv) protein is Antitoxin VapB2 (vapB2).